Consider the following 478-residue polypeptide: Cytochrome c-552 (478 aa).

The signal sequence occupies residues 1–26 (MARKTLRARRFFSLIFPFFFITSVYA). H94 is a heme c binding site. Heme is bound by residues C122, C125, and K126. Heme c is bound by residues C160, C163, H164, C209, C212, and H213. Residues E215, Y216, K261, and Q263 each coordinate Ca(2+). Y216 serves as a coordination point for substrate. H264 provides a ligand contact to substrate. The heme c site is built by H275, C282, C285, H286, H301, C314, C317, H318, and H393.

Belongs to the cytochrome c-552 family. Ca(2+) is required as a cofactor. Heme c serves as cofactor.

The protein localises to the periplasm. It catalyses the reaction 6 Fe(III)-[cytochrome c] + NH4(+) + 2 H2O = 6 Fe(II)-[cytochrome c] + nitrite + 8 H(+). The protein operates within nitrogen metabolism; nitrate reduction (assimilation). Functionally, catalyzes the reduction of nitrite to ammonia, consuming six electrons in the process. The chain is Cytochrome c-552 from Salmonella agona (strain SL483).